Consider the following 395-residue polypeptide: Phosphoserine aminotransferase (395 aa).

A Phosphothreonine modification is found at Thr20. 80–81 contributes to the pyridoxal 5'-phosphate binding site; that stretch reads GT. The residue at position 112 (Ser112) is a Phosphoserine. Pyridoxal 5'-phosphate contacts are provided by Trp113, Thr170, Asp194, and Gln217. At Lys218 the chain carries N6-(pyridoxal phosphate)lysine. Pyridoxal 5'-phosphate is bound at residue 271–272; the sequence is NT.

The protein belongs to the class-V pyridoxal-phosphate-dependent aminotransferase family. SerC subfamily. As to quaternary structure, homodimer. Pyridoxal 5'-phosphate serves as cofactor.

It catalyses the reaction O-phospho-L-serine + 2-oxoglutarate = 3-phosphooxypyruvate + L-glutamate. The enzyme catalyses 4-(phosphooxy)-L-threonine + 2-oxoglutarate = (R)-3-hydroxy-2-oxo-4-phosphooxybutanoate + L-glutamate. It functions in the pathway amino-acid biosynthesis; L-serine biosynthesis; L-serine from 3-phospho-D-glycerate: step 2/3. Phosphoserine aminotransferase (PSAT) is a pyridoxal 5'-phosphate-dependent enzyme involved in the second step of the phosphorylated pathway of serine biosynthesis. Catalyzes the reversible conversion of 3-phosphohydroxypyruvate to phosphoserine and of 3-hydroxy-2-oxo-4-phosphonooxybutanoate to phosphohydroxythreonine. Plays an indirect role in purine biosynthesis. This chain is Phosphoserine aminotransferase, found in Saccharomyces cerevisiae (strain ATCC 204508 / S288c) (Baker's yeast).